The primary structure comprises 82 residues: Cytochrome c-551 (82 aa).

Cysteine 12, cysteine 15, histidine 16, and methionine 61 together coordinate heme c.

Post-translationally, binds 1 heme c group covalently per subunit.

This is a prokaryotic monoheme cytochrome, unreactive with mitochondrial cytochrome C oxidase or reductase. It functions in nitrite and nitrate respiration in Pseudomonas, but it is also found in other bacteria. This chain is Cytochrome c-551, found in Pseudomonas denitrificans.